The primary structure comprises 181 residues: CASP-like protein 2C1 (181 aa).

The Cytoplasmic portion of the chain corresponds to Met1–Lys7. The helical transmembrane segment at Ile8–Gly28 threads the bilayer. Topologically, residues Leu29–His49 are extracellular. A helical membrane pass occupies residues Ala50–Cys70. The Cytoplasmic portion of the chain corresponds to Arg71–Gln98. Residues Leu99 to Ile119 form a helical membrane-spanning segment. Topologically, residues Thr120–Gln140 are extracellular. A helical membrane pass occupies residues Ile141–Ile161. Residues Ser162 to Thr181 are Cytoplasmic-facing.

Belongs to the Casparian strip membrane proteins (CASP) family. In terms of assembly, homodimer and heterodimers.

The protein resides in the cell membrane. The chain is CASP-like protein 2C1 from Populus trichocarpa (Western balsam poplar).